The following is a 526-amino-acid chain: Cyclin-L1 (526 aa).

Positions M1–T36 are disordered. Cyclin-like stretches follow at residues E88–K190 and K203–R287. The segment at K318–R526 is disordered. Position 325 is a phosphothreonine (T325). S335 and S338 each carry phosphoserine. Glycyl lysine isopeptide (Lys-Gly) (interchain with G-Cter in SUMO2) cross-links involve residues K339 and K347. The segment covering S342–S352 has biased composition (basic and acidic residues). A phosphoserine mark is found at S352 and S355. Basic and acidic residues predominate over residues V361–Q370. K362 participates in a covalent cross-link: Glycyl lysine isopeptide (Lys-Gly) (interchain with G-Cter in SUMO2). Position 374 is a phosphoserine (S374). 4 stretches are compositionally biased toward basic residues: residues D382–R418, R438–H452, S460–S476, and K486–R498. The interval R390–S432 is RS. Position 445 is a phosphoserine (S445). Over residues R499–S508 the composition is skewed to basic and acidic residues. Positions H509 to R526 are enriched in basic residues.

Belongs to the cyclin family. Cyclin L subfamily. (Microbial infection) Interacts with human herpes virus 1 (HHV-1) transcriptional regulator ICP22. In terms of assembly, interacts with POLR2A via its hyperphosphorylated C-terminal domain (CTD). Interacts with CDK11A, CDK12 and CDK13. Isoforms 1 and 2, but not isoform 3, interact with CDK11B. May form a ternary complex with CDK11B and casein kinase II (CKII). Interacts with pre-mRNA-splicing factors, including at least SRSF1, SRSF2 and SRSF7/SLU7. Widely expressed. Overexpression in primary tumors of head and neck squamous cell carcinomas (HNSCC).

The protein resides in the nucleus speckle. It is found in the nucleus. The protein localises to the nucleoplasm. Its function is as follows. Involved in pre-mRNA splicing. Functions in association with cyclin-dependent kinases (CDKs). Inhibited by the CDK-specific inhibitor CDKN1A/p21. May play a role in the regulation of RNA polymerase II (pol II). May be a candidate proto-oncogene in head and neck squamous cell carcinomas (HNSCC). The protein is Cyclin-L1 (CCNL1) of Homo sapiens (Human).